The sequence spans 400 residues: Queuine tRNA-ribosyltransferase catalytic subunit (400 aa).

Aspartate 89 functions as the Proton acceptor in the catalytic mechanism. Substrate-binding positions include 89–93, aspartate 143, glutamine 185, and glycine 212; that span reads DSGGF. An RNA binding region spans residues 243-249; sequence GVGFPVD. Catalysis depends on aspartate 262, which acts as the Nucleophile. Positions 267–271 are RNA binding; important for wobble base 34 recognition; it reads TRTAR. Cysteine 301, cysteine 303, cysteine 306, and histidine 331 together coordinate Zn(2+).

Belongs to the queuine tRNA-ribosyltransferase family. In terms of assembly, heterodimer of a catalytic subunit and an accessory subunit. Zn(2+) is required as a cofactor.

The protein resides in the cytoplasm. The catalysed reaction is guanosine(34) in tRNA + queuine = queuosine(34) in tRNA + guanine. In terms of biological role, catalytic subunit of the queuine tRNA-ribosyltransferase (TGT) that catalyzes the base-exchange of a guanine (G) residue with queuine (Q) at position 34 (anticodon wobble position) in tRNAs with GU(N) anticodons (tRNA-Asp, -Asn, -His and -Tyr), resulting in the hypermodified nucleoside queuosine (7-(((4,5-cis-dihydroxy-2-cyclopenten-1-yl)amino)methyl)-7-deazaguanosine). Catalysis occurs through a double-displacement mechanism. The nucleophile active site attacks the C1' of nucleotide 34 to detach the guanine base from the RNA, forming a covalent enzyme-RNA intermediate. The proton acceptor active site deprotonates the incoming queuine, allowing a nucleophilic attack on the C1' of the ribose to form the product. The sequence is that of Queuine tRNA-ribosyltransferase catalytic subunit from Caenorhabditis elegans.